The following is a 145-amino-acid chain: MATGTFDIIHPGHGFYLKKAKELGGKNSKLVVIVARDSTVRARKRKPVINEKQRLEVVKMLKPVDEAYLGCEGDIFKTVEKIKPDIIALGPDQDFDEKELQKELKKRNIDCKVVRIKEYKKSPLDSTCKIIKKIKQMKFDDIEKC.

ATP contacts are provided by residues 5–6 (TF), 10–13 (HPGH), Asp-92, and Tyr-119.

The protein belongs to the archaeal FAD synthase family. As to quaternary structure, homodimer. The cofactor is a divalent metal cation.

The catalysed reaction is FMN + ATP + H(+) = FAD + diphosphate. Its pathway is cofactor biosynthesis; FAD biosynthesis; FAD from FMN: step 1/1. In terms of biological role, catalyzes the transfer of the AMP portion of ATP to flavin mononucleotide (FMN) to produce flavin adenine dinucleotide (FAD) coenzyme. The polypeptide is FAD synthase (Methanothermus fervidus (strain ATCC 43054 / DSM 2088 / JCM 10308 / V24 S)).